The primary structure comprises 35 residues: Photosystem II reaction center protein T (35 aa).

Residues 3–23 (ALVYTFLLVSTLGIIFFAIFF) traverse the membrane as a helical segment.

Belongs to the PsbT family. As to quaternary structure, PSII is composed of 1 copy each of membrane proteins PsbA, PsbB, PsbC, PsbD, PsbE, PsbF, PsbH, PsbI, PsbJ, PsbK, PsbL, PsbM, PsbT, PsbY, PsbZ, Psb30/Ycf12, at least 3 peripheral proteins of the oxygen-evolving complex and a large number of cofactors. It forms dimeric complexes.

It is found in the plastid. The protein localises to the chloroplast thylakoid membrane. Functionally, found at the monomer-monomer interface of the photosystem II (PS II) dimer, plays a role in assembly and dimerization of PSII. PSII is a light-driven water plastoquinone oxidoreductase, using light energy to abstract electrons from H(2)O, generating a proton gradient subsequently used for ATP formation. The chain is Photosystem II reaction center protein T from Pisum sativum (Garden pea).